A 700-amino-acid polypeptide reads, in one-letter code: Calpain-2 catalytic subunit (700 aa).

A propeptide spans 2 to 19 (AGMAAALAKERAAAAGAG) (anchors to the small subunit). The Calpain catalytic domain occupies 45–344 (LFHDPSFPAG…YSRLEICNLT (300 aa)). 2 residues coordinate Ca(2+): Gly91 and Asp96. The active site involves Cys105. The Ca(2+) site is built by Glu175, Gln229, and Lys230. Active-site residues include His262 and Asn286. Ca(2+) contacts are provided by Glu292, Asp299, and Glu323. Positions 345-514 (PDTLASDRYK…KNANSTVIDD (170 aa)) are domain III. Positions 515–529 (EIEANFEETEIDEDD) are linker. The segment at 530-700 (IEPSFKKLFG…LINWLFFTVI (171 aa)) is domain IV. Ca(2+) is bound by residues Ala542, Asp545, Glu547, Glu552, Asp585, Asp587, Ser589, Lys591, Glu596, Asp615, Asp617, Ser619, Thr621, Glu626, Asp658, and Asn661. EF-hand domains are found at residues 572–605 (FSIETCKIMVDLLDNDGSGKLGLKEFHTLWTKIQ) and 602–637 (TKIQKYQKIYREIDVDRSGTMNSYEMRRALEAAGFK). In terms of domain architecture, EF-hand 3 spans 667–700 (IRLETLYKMFRKLDTEKTGTIELNLINWLFFTVI).

It belongs to the peptidase C2 family. As to quaternary structure, forms a heterodimer with a small (regulatory) subunit (CAPNS1). Requires Ca(2+) as cofactor. Ubiquitous.

The protein resides in the cytoplasm. Its subcellular location is the cell membrane. The catalysed reaction is Broad endopeptidase specificity.. With respect to regulation, activated by 200-1000 micromolar concentrations of calcium and inhibited by calpastatin. Functionally, calcium-regulated non-lysosomal thiol-protease which catalyze limited proteolysis of substrates involved in cytoskeletal remodeling and signal transduction. The protein is Calpain-2 catalytic subunit (CAPN2) of Gallus gallus (Chicken).